Consider the following 780-residue polypeptide: MDSKEEAIQLITEEKHFSDDALAYFKTCIGGRDVGVNYHVISVFGSQSSGKSTLLNILFNTSFDTMDAQIKRQQTTKGIWVAHSNELLSNVDVNPEDKSDLFILDVEGSDGLERGEDQDFERKAALFAISVSEVLIVNMWEQQIGLYQGNNMALLKTVFEVNLSLFGKNKNGHKVLLLFVIRDHVGVTPISSLRDTITTELINLWETLSKPAECENKKLSDFFELQFVGLSHKLLQEERFVQDVKSLGDHFIMKDNEDYYFKPEYHHNLPLDGWTLYAKNCWELIEENRDLDLPTQQILVARFKTEEILNDSLEVLKSKYDSNVDPVIKDKLKLIQELSVLKTECLDMYDQHASKYVSAVYLEKRDELEAKIYLKFLETITLFIDSVSQDIFLQLVEDVNSESSKEPIFSKRLSNSTEVAKSKFEDIIEEFAAAKILSEEVKEEVVKRFENDLKETSDKLRVTALQKLITRSSKIINARIKDVVPQLLSNPDVDVWDRIMDKFHSIFSSTLIKYKLDDDTYDFQFGGEDEENNSTYKSIRVAAWKSLNDTIHDYLKEDTICNILRDRFELKFRYDDEDSPILWKNEEEVDLAFRVAKEYAFKIFDVLALIKTSDNVEVVPDINFHDSDEMYEDDLGIYHSAKFSHILNEVQKEKIQIQVRRQINVTVLDAKRSMIKTTTHIPLWIYAIIVVLGWNEFMMVIRNPLFVTLTILILVSFYFINKFDLWGPVKSVAQTAAGETIGTIKTKLRDFVLEEHEKTPKIQSEKSNSDSEKVVENEKS.

The Cytoplasmic segment spans residues Met-1 to His-680. In terms of domain architecture, GB1/RHD3-type G spans Gly-35–Tyr-265. Residue Gly-45 to Ser-52 participates in GTP binding. Residues Glu-440 to Thr-463 adopt a coiled-coil conformation. A helical membrane pass occupies residues Ile-681 to Ile-701. The Lumenal segment spans residues Arg-702 to Pro-704. Residues Leu-705–Leu-725 traverse the membrane as a helical segment. Over Trp-726–Ser-780 the chain is Cytoplasmic. Residues His-756–Ser-780 are disordered.

It belongs to the TRAFAC class dynamin-like GTPase superfamily. GB1/RHD3 GTPase family. RHD3 subfamily.

The protein localises to the endoplasmic reticulum membrane. Functionally, cooperates with the reticulon proteins and tubule-shaping DP1 family proteins to generate and maintain the structure of the tubular endoplasmic reticulum network. Has GTPase activity, which is required for its function in ER organization. In Vanderwaltozyma polyspora (strain ATCC 22028 / DSM 70294 / BCRC 21397 / CBS 2163 / NBRC 10782 / NRRL Y-8283 / UCD 57-17) (Kluyveromyces polysporus), this protein is Protein SEY1.